The following is a 164-amino-acid chain: ATP synthase subunit b 1 (164 aa).

The helical transmembrane segment at 4-24 (MELAELWVAVAFFVFVGILLY) threads the bilayer.

This sequence belongs to the ATPase B chain family. As to quaternary structure, F-type ATPases have 2 components, F(1) - the catalytic core - and F(0) - the membrane proton channel. F(1) has five subunits: alpha(3), beta(3), gamma(1), delta(1), epsilon(1). F(0) has three main subunits: a(1), b(2) and c(10-14). The alpha and beta chains form an alternating ring which encloses part of the gamma chain. F(1) is attached to F(0) by a central stalk formed by the gamma and epsilon chains, while a peripheral stalk is formed by the delta and b chains.

It localises to the cell inner membrane. F(1)F(0) ATP synthase produces ATP from ADP in the presence of a proton or sodium gradient. F-type ATPases consist of two structural domains, F(1) containing the extramembraneous catalytic core and F(0) containing the membrane proton channel, linked together by a central stalk and a peripheral stalk. During catalysis, ATP synthesis in the catalytic domain of F(1) is coupled via a rotary mechanism of the central stalk subunits to proton translocation. In terms of biological role, component of the F(0) channel, it forms part of the peripheral stalk, linking F(1) to F(0). The protein is ATP synthase subunit b 1 of Azorhizobium caulinodans (strain ATCC 43989 / DSM 5975 / JCM 20966 / LMG 6465 / NBRC 14845 / NCIMB 13405 / ORS 571).